Here is a 37-residue protein sequence, read N- to C-terminus: Cytochrome b6-f complex subunit 5 (37 aa).

A helical transmembrane segment spans residues 5–25 (LLSGIVLGLVPITITGLLVTA).

This sequence belongs to the PetG family. As to quaternary structure, the 4 large subunits of the cytochrome b6-f complex are cytochrome b6, subunit IV (17 kDa polypeptide, PetD), cytochrome f and the Rieske protein, while the 4 small subunits are PetG, PetL, PetM and PetN. The complex functions as a dimer.

Its subcellular location is the plastid. It is found in the chloroplast thylakoid membrane. Functionally, component of the cytochrome b6-f complex, which mediates electron transfer between photosystem II (PSII) and photosystem I (PSI), cyclic electron flow around PSI, and state transitions. PetG is required for either the stability or assembly of the cytochrome b6-f complex. This chain is Cytochrome b6-f complex subunit 5, found in Tupiella akineta (Green alga).